Here is a 425-residue protein sequence, read N- to C-terminus: Stabilizer of axonemal microtubules 4 (425 aa).

Disordered stretches follow at residues 259 to 297 (RGSDRDTGYSRVSERSLNPRMPTPSSQPTSMSHRSYQPP) and 315 to 335 (NKEPTGFTLNNPSYVRSSYEQ). Residues 260-272 (GSDRDTGYSRVSE) are compositionally biased toward basic and acidic residues. The segment covering 277–290 (PRMPTPSSQPTSMS) has biased composition (low complexity). Positions 321 to 332 (FTLNNPSYVRSS) are enriched in polar residues.

As to quaternary structure, microtubule inner protein component of sperm flagellar doublet microtubules. Interacts with PPP1CA. Expressed in brain, ovaries and testis. Expressed in the tracheal epithelium and in secondary spermatocytes and spermatids present in the seminiferous tubule. Expressed in ependymal cells lining the ventricular walls of the brain.

The protein resides in the cell projection. It localises to the cilium. Its subcellular location is the cytoplasm. The protein localises to the cytoskeleton. It is found in the flagellum axoneme. The polypeptide is Stabilizer of axonemal microtubules 4 (Rattus norvegicus (Rat)).